The chain runs to 187 residues: UPF0301 protein Cpar_0662 (187 aa).

Belongs to the UPF0301 (AlgH) family.

This is UPF0301 protein Cpar_0662 from Chlorobaculum parvum (strain DSM 263 / NCIMB 8327) (Chlorobium vibrioforme subsp. thiosulfatophilum).